Reading from the N-terminus, the 618-residue chain is Putative UDP-glucuronate:xylan alpha-glucuronosyltransferase 3 (618 aa).

A helical; Signal-anchor for type II membrane protein membrane pass occupies residues 32–54 (GVKFNTLKLVLICIMLGALFTIY). 2 residues coordinate Mn(2+): Asp379 and Asp381. Substrate contacts are provided by residues 379 to 381 (DAD), 408 to 410 (NSG), 435 to 439 (NGGDQ), and 489 to 495 (HYLGYNK). Mn(2+) is bound at residue His489. The span at 598–608 (TNNSSTTTTSS) shows a compositional bias: low complexity. Residues 598-618 (TNNSSTTTTSSPPHKTALPSL) form a disordered region.

This sequence belongs to the glycosyltransferase 8 family. Glycogenin subfamily. It depends on Mn(2+) as a cofactor.

Its subcellular location is the golgi apparatus membrane. Functionally, may be involved in the substitutions of the xylan backbone in stem glucuronoxylan. The protein is Putative UDP-glucuronate:xylan alpha-glucuronosyltransferase 3 (GUX3) of Arabidopsis thaliana (Mouse-ear cress).